Reading from the N-terminus, the 438-residue chain is Coenzyme A disulfide reductase (438 aa).

8-33 (GAVAGGATCASQIRRLDKESEIIVFE) is a binding site for FAD. 5 residues coordinate substrate: T15, Q19, R22, S39, and N42. The active-site Nucleophile is C43. C43 functions as the Redox-active in the catalytic mechanism. Substrate is bound at residue K71. NADP(+) is bound at residue 151–166 (ALVVGAGYISLEVLEN). 267–277 (TNIPNIYALGD) lines the FAD pocket. Residue H299 coordinates substrate. Y419 contributes to the FAD binding site. Residue K427 coordinates substrate.

This sequence belongs to the class-III pyridine nucleotide-disulfide oxidoreductase family. Homodimer. The cofactor is FAD.

It carries out the reaction NADP(+) + 2 CoA = CoA-disulfide + NADPH + H(+). Catalyzes specifically the NADPH-dependent reduction of coenzyme A disulfide. The protein is Coenzyme A disulfide reductase of Staphylococcus epidermidis (strain ATCC 35984 / DSM 28319 / BCRC 17069 / CCUG 31568 / BM 3577 / RP62A).